The sequence spans 358 residues: Reverse gyrase subunit A (358 aa).

The Topo IA-type catalytic domain maps to 1 to 351 (MNATLRIRNR…KLYLELERVV (351 aa)). Y78 acts as the O-(5'-phospho-DNA)-tyrosine intermediate in catalysis.

This sequence belongs to the type IA topoisomerase family. As to quaternary structure, heterodimer of an RgyrA and RgyrB subunit. The topoisomerase domain is shared between the two subunits. Mg(2+) serves as cofactor.

Its subcellular location is the cytoplasm. Its function is as follows. Modifies the topological state of DNA by introducing positive supercoils in an ATP-dependent process; dATP also allows positive supercoiling. Increases the linking number in steps of +1. Only this subunit binds DNA, in isolation it does not hydrolyze ATP. Hydrolyzes ATP only in the presence of DNA. Transiently cleaves a single DNA strand and remains covalently bound to the 5' DNA end probably through a tyrosine residue. It changes linking number in steps of one, and nicks DNA preferentially at 5'-CNNN | 3'-sites with a strong preference for 4 pyrimidine residues. There are about 1000 heterodimers per cell. May be involved in rewinding the DNA strands in the regions of the chromosome that have opened up to allow transcription or replication. In terms of biological role, reverse gyrase activity is reconstituted after incubation at 80 degrees Celsius for 5 minutes, positive supercoiling requires ATP and Mg(2+). In the presence of ATP it binds and nicks substrate but does not make closed product. The polypeptide is Reverse gyrase subunit A (Methanopyrus kandleri (strain AV19 / DSM 6324 / JCM 9639 / NBRC 100938)).